We begin with the raw amino-acid sequence, 328 residues long: NADH-quinone oxidoreductase subunit H 2 (328 aa).

Transmembrane regions (helical) follow at residues 3–23 (LIVA…ILLL), 77–97 (FLFK…FAAI), 119–139 (VALL…IFGG), 165–185 (MGFA…LDIV), 191–211 (VWNV…GLAE), 250–270 (MVLV…GVLI), 272–292 (LPPL…FMWF), and 307–327 (IGWK…GVVF).

It belongs to the complex I subunit 1 family. NDH-1 is composed of 14 different subunits. Subunits NuoA, H, J, K, L, M, N constitute the membrane sector of the complex.

Its subcellular location is the cell inner membrane. The catalysed reaction is a quinone + NADH + 5 H(+)(in) = a quinol + NAD(+) + 4 H(+)(out). NDH-1 shuttles electrons from NADH, via FMN and iron-sulfur (Fe-S) centers, to quinones in the respiratory chain. The immediate electron acceptor for the enzyme in this species is believed to be ubiquinone. Couples the redox reaction to proton translocation (for every two electrons transferred, four hydrogen ions are translocated across the cytoplasmic membrane), and thus conserves the redox energy in a proton gradient. This subunit may bind ubiquinone. The protein is NADH-quinone oxidoreductase subunit H 2 of Rhizobium meliloti (strain 1021) (Ensifer meliloti).